A 398-amino-acid chain; its full sequence is Carboxyaminopropylagmatine dehydrogenase (398 aa).

Belongs to the saccharopine dehydrogenase family.

It carries out the reaction N(1)-[(S)-3-amino-3-carboxypropyl]agmatine + NADP(+) + H2O = L-aspartate 4-semialdehyde + agmatine + NADPH + H(+). The protein operates within amine and polyamine biosynthesis; spermidine biosynthesis. Functionally, dehydrogenase involved in the biosynthesis of spermidine via the carboxyaminopropylagmatine (CAPA) pathway. Catalyzes the reductive condensation of agmatine and L-aspartate-beta-semialdehyde (ASA) into CAPA. Shows activity toward putrescine and 1,3-diaminopropane, but the catalytic efficiency is three to four orders of magnitude lower than that for agmatine. Cannot use cadaverine or spermidine. This is Carboxyaminopropylagmatine dehydrogenase from Synechocystis sp. (strain ATCC 27184 / PCC 6803 / Kazusa).